A 444-amino-acid chain; its full sequence is Methionine aminopeptidase 2-1 (444 aa).

The disordered stretch occupies residues 1 to 92 (MAAQVTEKLQ…VPVSNLFPNN (92 aa)). Over residues 15–29 (NGQNGDAKANSTAVG) the composition is skewed to polar residues. Residues 34–45 (GEAEDDSDDEKE) show a composition bias toward acidic residues. Residues 59–73 (AKKKKRKSKKKKKGG) are compositionally biased toward basic residues. A substrate-binding site is contributed by histidine 197. Residues aspartate 217, aspartate 228, and histidine 297 each coordinate a divalent metal cation. Residue histidine 305 participates in substrate binding. A divalent metal cation is bound by residues glutamate 330 and glutamate 425.

Belongs to the peptidase M24A family. Methionine aminopeptidase eukaryotic type 2 subfamily. Co(2+) is required as a cofactor. Requires Zn(2+) as cofactor. It depends on Mn(2+) as a cofactor. Fe(2+) serves as cofactor.

The protein resides in the cytoplasm. It carries out the reaction Release of N-terminal amino acids, preferentially methionine, from peptides and arylamides.. Its function is as follows. Cotranslationally removes the N-terminal methionine from nascent proteins. The N-terminal methionine is often cleaved when the second residue in the primary sequence is small and uncharged (Met-Ala-, Cys, Gly, Pro, Ser, Thr, or Val). This Neosartorya fischeri (strain ATCC 1020 / DSM 3700 / CBS 544.65 / FGSC A1164 / JCM 1740 / NRRL 181 / WB 181) (Aspergillus fischerianus) protein is Methionine aminopeptidase 2-1.